Here is a 602-residue protein sequence, read N- to C-terminus: RecBCD enzyme subunit RecD (602 aa).

G174–T181 contacts ATP.

It belongs to the RecD family. In terms of assembly, heterotrimer of RecB, RecC and RecD. All subunits contribute to DNA-binding.

The catalysed reaction is Couples ATP hydrolysis with the unwinding of duplex DNA at the replication fork by translocating in the 5'-3' direction. This creates two antiparallel DNA single strands (ssDNA). The leading ssDNA polymer is the template for DNA polymerase III holoenzyme which synthesizes a continuous strand.. It carries out the reaction ATP + H2O = ADP + phosphate + H(+). Functionally, a helicase/nuclease that prepares dsDNA breaks (DSB) for recombinational DNA repair. Binds to DSBs and unwinds DNA via a highly rapid and processive ATP-dependent bidirectional helicase activity. Unwinds dsDNA until it encounters a Chi (crossover hotspot instigator) sequence from the 3' direction. Cuts ssDNA a few nucleotides 3' to the Chi site. The properties and activities of the enzyme are changed at Chi. The Chi-altered holoenzyme produces a long 3'-ssDNA overhang and facilitates RecA-binding to the ssDNA for homologous DNA recombination and repair. Holoenzyme degrades any linearized DNA that is unable to undergo homologous recombination. In the holoenzyme this subunit has ssDNA-dependent ATPase and 5'-3' helicase activity. When added to pre-assembled RecBC greatly stimulates nuclease activity and augments holoenzyme processivity. Negatively regulates the RecA-loading ability of RecBCD. This is RecBCD enzyme subunit RecD from Buchnera aphidicola subsp. Schizaphis graminum (strain Sg).